Consider the following 543-residue polypeptide: 2,3-bisphosphoglycerate-independent phosphoglycerate mutase (543 aa).

2 residues coordinate Mn(2+): D24 and S74. The active-site Phosphoserine intermediate is the S74. Substrate is bound by residues H135, R165 to D166, R197, R203, R268 to R271, and K341. Residues D408, H412, D449, H450, and H467 each contribute to the Mn(2+) site.

This sequence belongs to the BPG-independent phosphoglycerate mutase family. Monomer. Mn(2+) is required as a cofactor.

It carries out the reaction (2R)-2-phosphoglycerate = (2R)-3-phosphoglycerate. It participates in carbohydrate degradation; glycolysis; pyruvate from D-glyceraldehyde 3-phosphate: step 3/5. Functionally, catalyzes the interconversion of 2-phosphoglycerate and 3-phosphoglycerate. The sequence is that of 2,3-bisphosphoglycerate-independent phosphoglycerate mutase from Parasynechococcus marenigrum (strain WH8102).